A 574-amino-acid polypeptide reads, in one-letter code: Putative thiamine pyrophosphate-containing protein YdaP (574 aa).

Residues 28–55 (DSINEFIEELRHERNQLKFIQTRHEEVA) adopt a coiled-coil conformation. Position 52 (Glu52) interacts with thiamine diphosphate. FAD is bound by residues 256–277 (IGTK…LGTS) and 294–313 (DSDP…LVCD). Positions 384-464 (TVTVWMARHF…ITVVILNNEN (81 aa)) are thiamine pyrophosphate binding. Mg(2+) is bound by residues Asp435 and Asn462.

It belongs to the TPP enzyme family. Mg(2+) serves as cofactor. The cofactor is thiamine diphosphate.

The chain is Putative thiamine pyrophosphate-containing protein YdaP (ydaP) from Bacillus subtilis (strain 168).